Reading from the N-terminus, the 1358-residue chain is Mediator of RNA polymerase II transcription subunit 12 (1358 aa).

Belongs to the Mediator complex subunit 12 family. As to quaternary structure, component of the SRB8-11 complex, which itself associates with the Mediator complex.

The protein localises to the nucleus. Its function is as follows. Component of the SRB8-11 complex. The SRB8-11 complex is a regulatory module of the Mediator complex which is itself involved in regulation of basal and activated RNA polymerase II-dependent transcription. The SRB8-11 complex may be involved in the transcriptional repression of a subset of genes regulated by Mediator. It may inhibit the association of the Mediator complex with RNA polymerase II to form the holoenzyme complex. The protein is Mediator of RNA polymerase II transcription subunit 12 (SRB8) of Candida glabrata (strain ATCC 2001 / BCRC 20586 / JCM 3761 / NBRC 0622 / NRRL Y-65 / CBS 138) (Yeast).